Here is a 297-residue protein sequence, read N- to C-terminus: MALSTNNNSSHVGADDFLELENILSSEYNEEGIFKTSKTVCIRTDKRIGVGFLTPNDMISRLVGFINRKAEDAGVRSVESFRQISDVVLIIVPQIALPAELSLKLVDSANILEAVNDQEVTVNSTGGPCVVVMNCAHSIPNEDRTHVNGSEVHRRLGIQYQVDCDNISGRVTTFSITALWREAFSFRPSFYKVSDPLVVPISVGFRKAVIAKSHADLQRSIGRGLIVTHHSSESSVTSESPIDLTVKKSTGLKIRDKSEDDNQRKHPVPLTSSNNKLKTLRVSTTPIVNGRSTSTSE.

Positions 249 to 297 (STGLKIRDKSEDDNQRKHPVPLTSSNNKLKTLRVSTTPIVNGRSTSTSE) are disordered. Over residues 253–264 (KIRDKSEDDNQR) the composition is skewed to basic and acidic residues. The span at 270-297 (LTSSNNKLKTLRVSTTPIVNGRSTSTSE) shows a compositional bias: polar residues.

The protein localises to the host cell junction. It is found in the host plasmodesma. Its function is as follows. Transports viral genome to neighboring plant cells directly through plasmosdesmata, without any budding. The movement protein allows efficient cell to cell propagation, by bypassing the host cell wall barrier. This Citrus sinensis (Sweet orange) protein is Putative movement protein (MP).